The following is a 184-amino-acid chain: C-phycoerythrin class 1 subunit beta (184 aa).

The (2R,3E)-phycoerythrobilin site is built by Cys50 and Cys61. Residue Asn72 is modified to N4-methylasparagine. (2R,3E)-phycoerythrobilin contacts are provided by Cys82 and Cys165.

This sequence belongs to the phycobiliprotein family. In terms of assembly, heterodimer of an alpha and a beta chain. Contains three covalently linked phycoerythrobilin chromophores.

The protein localises to the cellular thylakoid membrane. Its function is as follows. Light-harvesting photosynthetic bile pigment-protein from the phycobiliprotein complex. This chain is C-phycoerythrin class 1 subunit beta (cpeB), found in Synechococcus sp. (strain WH8020).